The sequence spans 276 residues: Mitochondrial outer membrane protein porin of 34 kDa (276 aa).

Belongs to the eukaryotic mitochondrial porin (TC 1.B.8.1) family.

The protein localises to the mitochondrion outer membrane. Functionally, forms a channel through the cell membrane that allows diffusion of small hydrophilic molecules. The channel adopts an open conformation at low or zero membrane potential and a closed conformation at potentials above 30-40 mV. The open state has a weak anion selectivity whereas the closed state is cation-selective. The protein is Mitochondrial outer membrane protein porin of 34 kDa of Solanum tuberosum (Potato).